We begin with the raw amino-acid sequence, 928 residues long: Isoleucine--tRNA ligase (928 aa).

The 'HIGH' region signature appears at 57–67 (PFANGNIHMGH). L-isoleucyl-5'-AMP is bound at residue Glu552. The 'KMSKS' region signature appears at 593 to 597 (KMSKS). Lys596 contributes to the ATP binding site. Residues Cys887, Cys890, Cys907, and Cys910 each coordinate Zn(2+).

Belongs to the class-I aminoacyl-tRNA synthetase family. IleS type 1 subfamily. Monomer. It depends on Zn(2+) as a cofactor.

It localises to the cytoplasm. It catalyses the reaction tRNA(Ile) + L-isoleucine + ATP = L-isoleucyl-tRNA(Ile) + AMP + diphosphate. Catalyzes the attachment of isoleucine to tRNA(Ile). As IleRS can inadvertently accommodate and process structurally similar amino acids such as valine, to avoid such errors it has two additional distinct tRNA(Ile)-dependent editing activities. One activity is designated as 'pretransfer' editing and involves the hydrolysis of activated Val-AMP. The other activity is designated 'posttransfer' editing and involves deacylation of mischarged Val-tRNA(Ile). The chain is Isoleucine--tRNA ligase from Latilactobacillus sakei subsp. sakei (strain 23K) (Lactobacillus sakei subsp. sakei).